We begin with the raw amino-acid sequence, 809 residues long: Protein TOC75, chloroplastic (809 aa).

A compositionally biased stretch (polar residues) spans Met1–His17. Residues Met1–Cys35 constitute a chloroplast transit peptide. Residues Met1 to Asn44 are disordered. Residues His36–Ala131 constitute a chloroplast; outer membrane transit peptide. The Chloroplast intermembrane segment spans residues Asp132–Glu143. The beta stranded transmembrane segment at Leu144–Leu152 threads the bilayer. Over Gly153 to Lys160 the chain is Cytoplasmic. Residues Tyr161–Phe169 traverse the membrane as a beta stranded segment. At Asp170–Asp225 the chain is on the chloroplast intermembrane side. The beta stranded transmembrane segment at Gly226 to Phe234 threads the bilayer. At Ala235–Cys247 the chain is on the cytoplasmic side. A beta stranded membrane pass occupies residues Ile248–Gly254. The Chloroplast intermembrane portion of the chain corresponds to Gln255 to Ile357. The beta stranded transmembrane segment at Thr358–Leu365 threads the bilayer. The Cytoplasmic segment spans residues Asp366–Leu410. A beta stranded transmembrane segment spans residues Ala411 to Val418. Residues Asn419–Glu427 are Chloroplast intermembrane-facing. The beta stranded transmembrane segment at Gly428–Leu436 threads the bilayer. Residues Lys437 to Lys442 lie on the Cytoplasmic side of the membrane. A beta stranded transmembrane segment spans residues Ser443–Ile452. At Val453 to Ser464 the chain is on the chloroplast intermembrane side. The beta stranded transmembrane segment at Leu465–Phe473 threads the bilayer. Residues Glu474–Asp500 lie on the Cytoplasmic side of the membrane. The beta stranded transmembrane segment at Leu501 to His509 threads the bilayer. Residues Pro510–Arg553 are Chloroplast intermembrane-facing. A beta stranded membrane pass occupies residues Ala554 to Thr561. At Glu562 to Lys569 the chain is on the cytoplasmic side. Residues Phe570 to Glu577 form a beta stranded membrane-spanning segment. Residues Glu578–Pro684 lie on the Chloroplast intermembrane side of the membrane. The chain crosses the membrane as a beta stranded span at residues Pro685–Tyr693. At Gly694–Ala705 the chain is on the cytoplasmic side. Residues Phe706–Val714 traverse the membrane as a beta stranded segment. Residues Arg715–Ser776 are Chloroplast intermembrane-facing. A beta stranded transmembrane segment spans residues Tyr777–Leu783. Residues Gly784 to Gly797 are Cytoplasmic-facing. Residues Thr798–Phe805 form a beta stranded membrane-spanning segment. At Gly806–Phe809 the chain is on the chloroplast intermembrane side.

This sequence belongs to the TOC75 family. Part of the TOC core complex that includes a protein for the specific recognition of transit peptides surrounded by a ring composed of four proteins forming translocation channels, and four to five GTP-binding proteins providing energy. This core complex can interact with components of the TIC complex to form a larger import complex. Chloroplastic protein precursors such as prSS (precursor of the RuBisCO small subunit) also interact with these complexes. TOC75 interacts with OEP14, TOC34/OEP34, TOC86/OEP86, TIC55, TIC110/IEP110 and CLPC. In terms of tissue distribution, mostly expressed in young leaves, also present in old leaves, roots and stems (at protein level).

It is found in the plastid. The protein resides in the chloroplast outer membrane. Mediates the insertion of proteins targeted to the outer membrane of chloroplasts. Required for the import of protein precursors into chloroplasts. Forms the voltage-dependent preprotein translocation channels (hydrophilic beta barrel) of the TOC complex in the chloroplastic outer membrane. The narrowest inner diameter of this channel is approximately 14 Angstroms. This chain is Protein TOC75, chloroplastic (TOC75), found in Pisum sativum (Garden pea).